The sequence spans 156 residues: Ribosomal RNA large subunit methyltransferase H (156 aa).

Residues Leu73, Gly104, and 123–128 (LSSLTL) each bind S-adenosyl-L-methionine.

The protein belongs to the RNA methyltransferase RlmH family. As to quaternary structure, homodimer.

The protein resides in the cytoplasm. The enzyme catalyses pseudouridine(1915) in 23S rRNA + S-adenosyl-L-methionine = N(3)-methylpseudouridine(1915) in 23S rRNA + S-adenosyl-L-homocysteine + H(+). In terms of biological role, specifically methylates the pseudouridine at position 1915 (m3Psi1915) in 23S rRNA. This is Ribosomal RNA large subunit methyltransferase H from Ralstonia pickettii (strain 12J).